Consider the following 232-residue polypeptide: uncharacterized protein (232 aa).

An N-terminal signal peptide occupies residues 1 to 18; sequence MGILKSLFTLGKSFISQA. Residues 207–232 form a disordered region; sequence AEAGIGGSNKSSAQDVLARLQRQQGE.

Belongs to the PspA/Vipp/IM30 family.

This is an uncharacterized protein from Escherichia coli O6:H1 (strain CFT073 / ATCC 700928 / UPEC).